We begin with the raw amino-acid sequence, 54 residues long: Ferredoxin (54 aa).

2 consecutive 4Fe-4S ferredoxin-type domains span residues 2–28 and 29–54; these read HVISDECVKCGACASTCPTGAIEEGET and KYVVTDSCIDCGACEAVCPTGAISAE. [4Fe-4S] cluster is bound by residues cysteine 8, cysteine 11, cysteine 14, cysteine 18, cysteine 36, cysteine 39, cysteine 42, and cysteine 46.

It depends on [4Fe-4S] cluster as a cofactor.

Its function is as follows. Ferredoxins are iron-sulfur proteins that transfer electrons in a wide variety of metabolic reactions. This Megasphaera elsdenii protein is Ferredoxin.